A 347-amino-acid polypeptide reads, in one-letter code: uncharacterized protein (347 aa).

The N-terminal stretch at 1–21 (MNKKSLNIVVMFGILMILAFS) is a signal peptide.

It belongs to the bacterial solute-binding protein 1 family. WtpA subfamily.

This is an uncharacterized protein from Methanococcus maripaludis (strain C5 / ATCC BAA-1333).